The following is a 195-amino-acid chain: CD70 antigen (195 aa).

The Cytoplasmic segment spans residues Met1 to Pro23. Residues Trp24–Leu44 form a helical; Signal-anchor for type II membrane protein membrane-spanning segment. Residues Ser45–Pro195 are Extracellular-facing. In terms of domain architecture, THD spans His58–Ile193. N-linked (GlcNAc...) asparagine glycosylation is found at Asn65 and Asn116. Cystine bridges form between Cys117–Cys153 and Cys135–Cys170. N-linked (GlcNAc...) asparagine glycosylation occurs at Asn172.

It belongs to the tumor necrosis factor family. As to quaternary structure, homotrimer. N-glycosylated. Very low level of expression. Detected in splenocytes and thymocytes.

Its subcellular location is the cell membrane. Its function is as follows. Expressed at the plasma membrane of B cells, it is the ligand of the CD27 receptor which is specifically expressed at the surface of T cells. The CD70-CD27 signaling pathway mediates antigen-specific T cell activation and expansion which in turn provides immune surveillance of B cells. This chain is CD70 antigen, found in Mus musculus (Mouse).